Consider the following 326-residue polypeptide: Mitochondrial glycine transporter (326 aa).

Solcar repeat units lie at residues 22–106 (SKTT…LRTS), 135–216 (SANL…LKRY), and 228–312 (SSSS…LILR). The next 6 helical transmembrane spans lie at 28–53 (FGAG…TRVQ), 81–107 (GTLP…RTSL), 138–163 (LATG…VRYE), 191–214 (GFGA…EQLK), 232–258 (INFV…KTRL), and 287–305 (GLGL…AWTV).

Belongs to the mitochondrial carrier (TC 2.A.29) family. SLC25A38 subfamily.

Its subcellular location is the mitochondrion inner membrane. It carries out the reaction glycine(in) = glycine(out). Functionally, mitochondrial glycine transporter that imports glycine into the mitochondrial matrix. Plays an important role in providing glycine for the first enzymatic step in heme biosynthesis, the condensation of glycine with succinyl-CoA to produce 5-aminolevulinate (ALA) in the mitochondrial matrix. This chain is Mitochondrial glycine transporter, found in Emericella nidulans (strain FGSC A4 / ATCC 38163 / CBS 112.46 / NRRL 194 / M139) (Aspergillus nidulans).